Reading from the N-terminus, the 495-residue chain is Glutamate--tRNA ligase 1 (495 aa).

The short motif at 10–20 (PSPTGALHMGG) is the 'HIGH' region element. The short motif at 251–255 (KLSKR) is the 'KMSKS' region element. ATP is bound at residue K254.

The protein belongs to the class-I aminoacyl-tRNA synthetase family. Glutamate--tRNA ligase type 1 subfamily. As to quaternary structure, monomer.

It is found in the cytoplasm. The catalysed reaction is tRNA(Glu) + L-glutamate + ATP = L-glutamyl-tRNA(Glu) + AMP + diphosphate. Catalyzes the attachment of glutamate to tRNA(Glu) in a two-step reaction: glutamate is first activated by ATP to form Glu-AMP and then transferred to the acceptor end of tRNA(Glu). This Syntrophomonas wolfei subsp. wolfei (strain DSM 2245B / Goettingen) protein is Glutamate--tRNA ligase 1.